Here is a 193-residue protein sequence, read N- to C-terminus: Cysteine and glycine-rich protein 1 (193 aa).

An LIM zinc-binding 1 domain is found at 10–61 (CGVCQKTVYFAEEVQCEGNSFHKSCFLCMVCKKNLDSTTVAVHGEEIYCKSC). Residues 64 to 69 (KKYGPK) carry the Nuclear localization signal motif. Phosphoserine is present on S81. Residue K84 is modified to N6-acetyllysine. K91 is covalently cross-linked (Glycyl lysine isopeptide (Lys-Gly) (interchain with G-Cter in SUMO2)). K112, K131, K137, and K161 each carry N6-acetyllysine. The LIM zinc-binding 2 domain maps to 119 to 170 (CPRCSQAVYAAEKVIGAGKSWHKSCFRCAKCGKGLESTTLADKDGEIYCKGC). Residue S192 is modified to Phosphoserine.

In terms of assembly, interacts with ASCC1; ASCC2 and TRIP4.

It localises to the nucleus. In terms of biological role, could play a role in neuronal development. The protein is Cysteine and glycine-rich protein 1 (Csrp1) of Rattus norvegicus (Rat).